The following is a 130-amino-acid chain: Large ribosomal subunit protein bL12 (130 aa).

The protein belongs to the bacterial ribosomal protein bL12 family. Homodimer. Part of the ribosomal stalk of the 50S ribosomal subunit. Forms a multimeric L10(L12)X complex, where L10 forms an elongated spine to which 2 to 4 L12 dimers bind in a sequential fashion. Binds GTP-bound translation factors.

Functionally, forms part of the ribosomal stalk which helps the ribosome interact with GTP-bound translation factors. Is thus essential for accurate translation. This is Large ribosomal subunit protein bL12 from Mycobacterium bovis (strain ATCC BAA-935 / AF2122/97).